The sequence spans 171 residues: Photosystem I assembly protein Ycf3 (171 aa).

TPR repeat units lie at residues 35 to 68, 72 to 105, and 120 to 153; these read AFTY…EIDP, SYIL…NPSL, and GEQA…APSN.

Belongs to the Ycf3 family.

Its subcellular location is the plastid. The protein resides in the chloroplast thylakoid membrane. Its function is as follows. Essential for the assembly of the photosystem I (PSI) complex. May act as a chaperone-like factor to guide the assembly of the PSI subunits. This Angiopteris evecta (Mule's foot fern) protein is Photosystem I assembly protein Ycf3.